A 166-amino-acid chain; its full sequence is Endoribonuclease YbeY (166 aa).

The Zn(2+) site is built by His132, His136, and His142.

The protein belongs to the endoribonuclease YbeY family. Requires Zn(2+) as cofactor.

Its subcellular location is the cytoplasm. Functionally, single strand-specific metallo-endoribonuclease involved in late-stage 70S ribosome quality control and in maturation of the 3' terminus of the 16S rRNA. The polypeptide is Endoribonuclease YbeY (Clostridium botulinum (strain Eklund 17B / Type B)).